The chain runs to 407 residues: (R)-phenyllactyl-CoA dehydratase alpha subunit (407 aa).

A propeptide spanning residues 1-4 (MSDR) is cleaved from the precursor.

It belongs to the FldB/FldC dehydratase alpha/beta subunit family. Part of the heterotrimeric phenyllactate dehydratase complex FldABC, composed of (R)-phenyllactate CoA-transferase (FldA) and a heterodimeric (R)-phenyllactyl-CoA dehydratase (FldB and FldC). [4Fe-4S] cluster is required as a cofactor. No flavin could be detected in the FldABC complex, and the addition of FAD, FMN or riboflavin to the dehydratase do not increase enzymatic activity. serves as cofactor.

The enzyme catalyses (R)-3-phenyllactoyl-CoA = (E)-cinnamoyl-CoA + H2O. It catalyses the reaction (R)-3-(4-hydroxyphenyl)lactoyl-CoA = (E)-4-coumaroyl-CoA + H2O. It carries out the reaction (R)-3-(indol-3-yl)lactoyl-CoA = (E)-3-(indol-3-yl)acryloyl-CoA + H2O. Its pathway is amino-acid degradation; L-phenylalanine degradation. Its function is as follows. Component of the phenyllactate dehydratase complex FldABC that is involved in the fermentation of L-phenylalanine via a Stickland reaction. This complex catalyzes the reversible syn-dehydration of (R)-phenyllactate to (E)-cinnamate in two steps, a CoA-transfer from cinnamoyl-CoA to phenyllactate, catalyzed by FldA, followed by the dehydration of phenyllactyl-CoA to cinnamoyl-CoA, catalyzed by FldB and FldC. Requires the activator FldI to initiate catalysis. The chain is (R)-phenyllactyl-CoA dehydratase alpha subunit from Clostridium sporogenes.